We begin with the raw amino-acid sequence, 294 residues long: Casein kinase II subunit beta (294 aa).

2 disordered regions span residues 66 to 90 (DHNT…SKRN) and 269 to 294 (KRME…MASE). The segment covering 70 to 87 (DNTTTNTSNNNDSRNGTS) has biased composition (low complexity). Residues 273 to 288 (EDDEEEEDEVEEEDDD) show a composition bias toward acidic residues.

This sequence belongs to the casein kinase 2 subunit beta family. In terms of assembly, tetramer composed of two alpha chains, one beta chain and one beta' chain. Post-translationally, phosphorylated by alpha subunit.

Functionally, regulatory subunit of casein kinase II/CK2. As part of the kinase complex regulates the basal catalytic activity of the alpha subunit a constitutively active serine/threonine-protein kinase that phosphorylates a large number of substrates containing acidic residues C-terminal to the phosphorylated serine or threonine. The chain is Casein kinase II subunit beta (CKB1) from Candida albicans (Yeast).